The chain runs to 352 residues: NADH-ubiquinone oxidoreductase chain 2 (352 aa).

The next 12 membrane-spanning stretches (helical) occupy residues 4 to 24 (IVSTFLFVTVVSGTIIVVSSE), 26 to 46 (WFIIWVGLELSTLALVPILCS), 67 to 87 (AALLLNGALGQAWLTGSWSIL), 96 to 116 (ICLSIALAFKIGLAPVHFWFP), 124 to 144 (FFQGLIIATWQKIAPLILMFY), 148 to 168 (LGFSYLLITPSLISVLIGGWG), 177 to 197 (KILAFSSIGNMGWLVITSAYS), 198 to 218 (FNAAIIMLVIYLIINTSLFLL), 241 to 261 (VALVLLVMLSLGGLPPLTGFI), 264 to 284 (FTSLYFLVANNFIILSSIMII), 290 to 310 (YFFYLRISFNTSLFLFPQHII), and 332 to 352 (SVSTVLSTLAIPLTLPLYIIT).

This sequence belongs to the complex I subunit 2 family.

The protein resides in the mitochondrion inner membrane. The enzyme catalyses a ubiquinone + NADH + 5 H(+)(in) = a ubiquinol + NAD(+) + 4 H(+)(out). Its function is as follows. Core subunit of the mitochondrial membrane respiratory chain NADH dehydrogenase (Complex I) that is believed to belong to the minimal assembly required for catalysis. Complex I functions in the transfer of electrons from NADH to the respiratory chain. The immediate electron acceptor for the enzyme is believed to be ubiquinone. The chain is NADH-ubiquinone oxidoreductase chain 2 (ND2) from Strongylocentrotus purpuratus (Purple sea urchin).